A 414-amino-acid chain; its full sequence is Imidazolonepropionase (414 aa).

2 residues coordinate Fe(3+): His-73 and His-75. Zn(2+) is bound by residues His-73 and His-75. 4-imidazolone-5-propanoate-binding residues include Arg-82, Tyr-145, and His-178. Residue Tyr-145 coordinates N-formimidoyl-L-glutamate. His-249 is a binding site for Fe(3+). A Zn(2+)-binding site is contributed by His-249. Gln-252 serves as a coordination point for 4-imidazolone-5-propanoate. Asp-324 is a binding site for Fe(3+). Zn(2+) is bound at residue Asp-324. Residues Asn-326 and Gly-328 each contribute to the N-formimidoyl-L-glutamate site. Ser-329 is a binding site for 4-imidazolone-5-propanoate.

The protein belongs to the metallo-dependent hydrolases superfamily. HutI family. The cofactor is Zn(2+). Fe(3+) serves as cofactor.

The protein localises to the cytoplasm. It carries out the reaction 4-imidazolone-5-propanoate + H2O = N-formimidoyl-L-glutamate. It participates in amino-acid degradation; L-histidine degradation into L-glutamate; N-formimidoyl-L-glutamate from L-histidine: step 3/3. Catalyzes the hydrolytic cleavage of the carbon-nitrogen bond in imidazolone-5-propanoate to yield N-formimidoyl-L-glutamate. It is the third step in the universal histidine degradation pathway. This is Imidazolonepropionase from Shewanella pealeana (strain ATCC 700345 / ANG-SQ1).